The sequence spans 286 residues: AB hydrolase superfamily protein YfhM (286 aa).

The AB hydrolase-1 domain occupies 27–272 (PLIVLLHGFP…ASHWINHEKP (246 aa)). Residue Asp-103 is the Nucleophile of the active site. Tyr-210 acts as the Proton donor in catalysis. His-265 acts as the Proton acceptor in catalysis.

Belongs to the AB hydrolase superfamily. Epoxide hydrolase family.

The sequence is that of AB hydrolase superfamily protein YfhM (yfhM) from Bacillus subtilis (strain 168).